A 201-amino-acid polypeptide reads, in one-letter code: Adenylyl-sulfate kinase (201 aa).

35–42 (GLSGSGKS) is an ATP binding site. Ser109 serves as the catalytic Phosphoserine intermediate.

It belongs to the APS kinase family.

The enzyme catalyses adenosine 5'-phosphosulfate + ATP = 3'-phosphoadenylyl sulfate + ADP + H(+). It participates in sulfur metabolism; hydrogen sulfide biosynthesis; sulfite from sulfate: step 2/3. Its function is as follows. Catalyzes the synthesis of activated sulfate. The protein is Adenylyl-sulfate kinase of Salmonella paratyphi A (strain AKU_12601).